Consider the following 486-residue polypeptide: Transmembrane protein 39A (486 aa).

Asparagine 31 carries an N-linked (GlcNAc...) asparagine glycan. 8 helical membrane passes run 72 to 92 (SLFF…IQYI), 110 to 130 (TSLN…VMLA), 155 to 175 (LILA…WTLV), 182 to 202 (SVLN…LYCF), 285 to 305 (EVLF…LCFV), 317 to 337 (CEHL…QLLP), 418 to 438 (VLNL…YSLL), and 444 to 464 (NHTL…FKLL).

It belongs to the TMEM39 family. In terms of assembly, interacts with SACM1L, SEC23A and SEC24A.

It is found in the endoplasmic reticulum membrane. Regulates autophagy by controlling the spatial distribution and levels of the intracellular phosphatidylinositol 4-phosphate (PtdIns(4)P) pools. Modulates (PtdIns(4)P) levels by regulating the ER-to-Golgi trafficking of the phosphatidylinositide phosphatase SACM1L. In Mus musculus (Mouse), this protein is Transmembrane protein 39A (Tmem39a).